The sequence spans 249 residues: ATP-dependent dethiobiotin synthetase BioD (249 aa).

11–16 (NVGKTI) lines the ATP pocket. Threonine 15 serves as a coordination point for Mg(2+). Residue lysine 31 is part of the active site. Position 35 (threonine 35) interacts with substrate. ATP-binding positions include aspartate 40, 127–130 (EGAG), 188–189 (NS), and 215–217 (PYL). Aspartate 40 and glutamate 127 together coordinate Mg(2+).

The protein belongs to the dethiobiotin synthetase family. As to quaternary structure, homodimer. Requires Mg(2+) as cofactor.

It localises to the cytoplasm. It carries out the reaction (7R,8S)-7,8-diammoniononanoate + CO2 + ATP = (4R,5S)-dethiobiotin + ADP + phosphate + 3 H(+). It functions in the pathway cofactor biosynthesis; biotin biosynthesis; biotin from 7,8-diaminononanoate: step 1/2. In terms of biological role, catalyzes a mechanistically unusual reaction, the ATP-dependent insertion of CO2 between the N7 and N8 nitrogen atoms of 7,8-diaminopelargonic acid (DAPA, also called 7,8-diammoniononanoate) to form a ureido ring. The polypeptide is ATP-dependent dethiobiotin synthetase BioD (Neorickettsia sennetsu (strain ATCC VR-367 / Miyayama) (Ehrlichia sennetsu)).